The primary structure comprises 354 residues: Photosystem II D2 protein (354 aa).

The residue at position 2 (T2) is an N-acetylthreonine. Position 2 is a phosphothreonine (T2). A helical transmembrane segment spans residues 42–62 (CAYFALGGWFTGTTFVTSWYT). Position 119 (H119) interacts with chlorophyll a. A helical transmembrane segment spans residues 126–142 (GFMLRQFELARSVQLRP). Positions 131 and 144 each coordinate pheophytin a. A helical membrane pass occupies residues 154–167 (VFVSVFLIYPLGQS). H199 serves as a coordination point for chlorophyll a. The helical transmembrane segment at 209-229 (AALLCAIHGATVENTLFEDGD) threads the bilayer. A plastoquinone is bound by residues H216 and F263. Residue H216 coordinates Fe cation. H270 is a Fe cation binding site. Residues 280-296 (GLWMSALGVVGLALNLR) traverse the membrane as a helical segment.

It belongs to the reaction center PufL/M/PsbA/D family. In terms of assembly, PSII is composed of 1 copy each of membrane proteins PsbA, PsbB, PsbC, PsbD, PsbE, PsbF, PsbH, PsbI, PsbJ, PsbK, PsbL, PsbM, PsbT, PsbX, PsbY, PsbZ, Psb30/Ycf12, at least 3 peripheral proteins of the oxygen-evolving complex and a large number of cofactors. It forms dimeric complexes. It depends on The D1/D2 heterodimer binds P680, chlorophylls that are the primary electron donor of PSII, and subsequent electron acceptors. It shares a non-heme iron and each subunit binds pheophytin, quinone, additional chlorophylls, carotenoids and lipids. There is also a Cl(-1) ion associated with D1 and D2, which is required for oxygen evolution. The PSII complex binds additional chlorophylls, carotenoids and specific lipids. as a cofactor.

It localises to the plastid. The protein resides in the chloroplast thylakoid membrane. The enzyme catalyses 2 a plastoquinone + 4 hnu + 2 H2O = 2 a plastoquinol + O2. Photosystem II (PSII) is a light-driven water:plastoquinone oxidoreductase that uses light energy to abstract electrons from H(2)O, generating O(2) and a proton gradient subsequently used for ATP formation. It consists of a core antenna complex that captures photons, and an electron transfer chain that converts photonic excitation into a charge separation. The D1/D2 (PsbA/PsbD) reaction center heterodimer binds P680, the primary electron donor of PSII as well as several subsequent electron acceptors. D2 is needed for assembly of a stable PSII complex. This Piper cenocladum (Ant piper) protein is Photosystem II D2 protein.